Consider the following 438-residue polypeptide: Serine--tRNA ligase (438 aa).

245-247 (TSE) is a binding site for L-serine. 276-278 (RSE) serves as a coordination point for ATP. Glutamate 299 provides a ligand contact to L-serine. ATP is bound at residue 363-366 (EISS). Serine 398 contributes to the L-serine binding site.

This sequence belongs to the class-II aminoacyl-tRNA synthetase family. Type-1 seryl-tRNA synthetase subfamily. In terms of assembly, homodimer. The tRNA molecule binds across the dimer.

It localises to the cytoplasm. It carries out the reaction tRNA(Ser) + L-serine + ATP = L-seryl-tRNA(Ser) + AMP + diphosphate + H(+). The catalysed reaction is tRNA(Sec) + L-serine + ATP = L-seryl-tRNA(Sec) + AMP + diphosphate + H(+). It participates in aminoacyl-tRNA biosynthesis; selenocysteinyl-tRNA(Sec) biosynthesis; L-seryl-tRNA(Sec) from L-serine and tRNA(Sec): step 1/1. In terms of biological role, catalyzes the attachment of serine to tRNA(Ser). Is also able to aminoacylate tRNA(Sec) with serine, to form the misacylated tRNA L-seryl-tRNA(Sec), which will be further converted into selenocysteinyl-tRNA(Sec). The polypeptide is Serine--tRNA ligase (Verminephrobacter eiseniae (strain EF01-2)).